A 1623-amino-acid polypeptide reads, in one-letter code: Histone-lysine N-methyltransferase set-9 (1623 aa).

5 disordered regions span residues 1 to 102 (MADG…APQQ), 112 to 131 (AADA…RPTE), 198 to 227 (EDAV…SVAS), 448 to 600 (QRPG…VLRP), and 645 to 781 (TGQS…DEAA). Basic and acidic residues predominate over residues 62–71 (HQMENQEFYH). A compositionally biased stretch (low complexity) spans 77 to 100 (EPQQIPQIPVFQPAAYNPPNYVAP). Residues 206-227 (PGTQYRRNQQAGGGLPSTSVAS) show a composition bias toward polar residues. The segment covering 554–573 (MTQEEKNAHFARLTTDKEKP) has biased composition (basic and acidic residues). Over residues 587–597 (PHVPPPPPPLV) the composition is skewed to pro residues. Residues 645-669 (TGQSGSSAAARQRTVSGSAARAQTY) show a composition bias toward polar residues. A compositionally biased stretch (basic residues) spans 723 to 733 (HRPRGRPKGTR). The span at 772–781 (SESEGIDEAA) shows a compositional bias: acidic residues. Residues 786-834 (TMRCHCGMDHGDGDTIECEGCKTWQHMACMGLTLKSNTSKYKCEMCLPR) form a PHD-type zinc finger. Positions 857–895 (AARKQKRKSEPVEQKQKSSQPSTSRKSAPMALQQPAEPR) are disordered. Residues 873-882 (KSSQPSTSRK) are compositionally biased toward polar residues. An SET domain is found at 965–1056 (MSSEVKRQPG…RNTEVTLPFD (92 aa)). Basic and acidic residues-rich tracts occupy residues 1089–1157 (AERH…KKME) and 1172–1194 (AREE…EGKR). Disordered regions lie at residues 1089–1318 (AERH…NVAP) and 1356–1623 (LLAG…TRWN). Residues 1093-1201 (RAMDHKKQEA…GKRKEARRRS (109 aa)) adopt a coiled-coil conformation. Polar residues predominate over residues 1242 to 1252 (TTQPSTSSFAT). Over residues 1282–1293 (ATTVATPKATTA) the composition is skewed to low complexity. Residues 1364-1401 (FSEVRAQIEEENRMKERSRKREAKKKAVEKEKKEHRKE) are a coiled coil. 4 stretches are compositionally biased toward basic and acidic residues: residues 1365–1378 (SEVR…NRMK), 1388–1406 (KKAV…KKTN), 1413–1429 (KSEK…EKKP), and 1447–1464 (KKTE…ESSS). The segment covering 1533-1544 (SSSNTAPTTTIA) has biased composition (polar residues).

It belongs to the class V-like SAM-binding methyltransferase superfamily. In terms of tissue distribution, predominantly expressed in the germline (at protein level).

Its subcellular location is the nucleus. The enzyme catalyses L-lysyl-[histone] + S-adenosyl-L-methionine = N(6)-methyl-L-lysyl-[histone] + S-adenosyl-L-homocysteine + H(+). In terms of biological role, histone methyltransferase. Might play a role in transcriptional regulation. Together with set-26, negatively regulates lifespan in a germline-independent, partially daf-16-dependent fashion. Together with set-26, plays a role in germline development and maintenance and might play a role in the restriction of the trimethylation mark on histone H3 'Lys-4'(H3K4me3) to target genes specifically in the germline. The sequence is that of Histone-lysine N-methyltransferase set-9 from Caenorhabditis elegans.